Here is a 193-residue protein sequence, read N- to C-terminus: Pyridoxal 5'-phosphate synthase subunit PdxT (193 aa).

48 to 50 (GES) lines the L-glutamine pocket. Cys-80 acts as the Nucleophile in catalysis. Residues Arg-112 and 140-141 (IR) each bind L-glutamine. Residues His-176 and Glu-178 each act as charge relay system in the active site.

This sequence belongs to the glutaminase PdxT/SNO family. In terms of assembly, in the presence of PdxS, forms a dodecamer of heterodimers. Only shows activity in the heterodimer.

It catalyses the reaction aldehydo-D-ribose 5-phosphate + D-glyceraldehyde 3-phosphate + L-glutamine = pyridoxal 5'-phosphate + L-glutamate + phosphate + 3 H2O + H(+). The catalysed reaction is L-glutamine + H2O = L-glutamate + NH4(+). It participates in cofactor biosynthesis; pyridoxal 5'-phosphate biosynthesis. Catalyzes the hydrolysis of glutamine to glutamate and ammonia as part of the biosynthesis of pyridoxal 5'-phosphate. The resulting ammonia molecule is channeled to the active site of PdxS. The polypeptide is Pyridoxal 5'-phosphate synthase subunit PdxT (Mycolicibacterium smegmatis (strain ATCC 700084 / mc(2)155) (Mycobacterium smegmatis)).